Reading from the N-terminus, the 283-residue chain is Thymidylate synthase (283 aa).

Position 22 (arginine 22) interacts with dUMP. The Nucleophile role is filled by cysteine 160. Residues 180–183 (RSCD), asparagine 191, and 221–223 (HIY) contribute to the dUMP site. Aspartate 183 provides a ligand contact to (6R)-5,10-methylene-5,6,7,8-tetrahydrofolate. Serine 282 provides a ligand contact to (6R)-5,10-methylene-5,6,7,8-tetrahydrofolate.

This sequence belongs to the thymidylate synthase family. Bacterial-type ThyA subfamily. Homodimer.

It is found in the cytoplasm. It catalyses the reaction dUMP + (6R)-5,10-methylene-5,6,7,8-tetrahydrofolate = 7,8-dihydrofolate + dTMP. The protein operates within pyrimidine metabolism; dTTP biosynthesis. Its function is as follows. Catalyzes the reductive methylation of 2'-deoxyuridine-5'-monophosphate (dUMP) to 2'-deoxythymidine-5'-monophosphate (dTMP) while utilizing 5,10-methylenetetrahydrofolate (mTHF) as the methyl donor and reductant in the reaction, yielding dihydrofolate (DHF) as a by-product. This enzymatic reaction provides an intracellular de novo source of dTMP, an essential precursor for DNA biosynthesis. This is Thymidylate synthase from Vibrio cholerae serotype O1 (strain ATCC 39315 / El Tor Inaba N16961).